We begin with the raw amino-acid sequence, 274 residues long: Large ribosomal subunit protein uL2 (274 aa).

The disordered stretch occupies residues 221–256; the sequence is RGTAMNPVDHPHGGGEGRNFGKHPVTPWGVPTKGYK.

This sequence belongs to the universal ribosomal protein uL2 family. As to quaternary structure, part of the 50S ribosomal subunit. Forms a bridge to the 30S subunit in the 70S ribosome.

One of the primary rRNA binding proteins. Required for association of the 30S and 50S subunits to form the 70S ribosome, for tRNA binding and peptide bond formation. It has been suggested to have peptidyltransferase activity; this is somewhat controversial. Makes several contacts with the 16S rRNA in the 70S ribosome. The chain is Large ribosomal subunit protein uL2 from Thioalkalivibrio sulfidiphilus (strain HL-EbGR7).